We begin with the raw amino-acid sequence, 89 residues long: Small ribosomal subunit protein uS14A (89 aa).

Belongs to the universal ribosomal protein uS14 family. Part of the 30S ribosomal subunit. Contacts proteins S3 and S10.

Functionally, binds 16S rRNA, required for the assembly of 30S particles and may also be responsible for determining the conformation of the 16S rRNA at the A site. The polypeptide is Small ribosomal subunit protein uS14A (Staphylococcus saprophyticus subsp. saprophyticus (strain ATCC 15305 / DSM 20229 / NCIMB 8711 / NCTC 7292 / S-41)).